A 219-amino-acid chain; its full sequence is Transmembrane emp24 domain-containing protein 10 (219 aa).

The N-terminal stretch at 1–31 (MSGLSGPLSWPGPLLSALLFLFLLGPSSVLG) is a signal peptide. Residues 1–142 (MSGLSGPLSW…KNYEEIAKVE (142 aa)) are required for interaction with STX17. The Lumenal segment spans residues 32–185 (ISFHLPVNSR…RDTNESTNTR (154 aa)). In terms of domain architecture, GOLD spans 41–193 (RKCLREEIHK…TRVLYFSIFS (153 aa)). Residues 147-178 (LEVELRRLEDLSESIVNDFAYMKKREEEMRDT) form a required for TMED10 and TMED2 cis-Golgi network localization region. Dimethylated arginine occurs at positions 171 and 176. A glycan (N-linked (GlcNAc...) asparagine) is linked at Asn-179. Residues 186 to 206 (VLYFSIFSMFCLIGLATWQVF) traverse the membrane as a helical segment. Residues 204–219 (QVFYLRRFFKAKKLIE) are interaction with COPG1. Over 207 to 219 (YLRRFFKAKKLIE) the chain is Cytoplasmic. Residues 207 to 219 (YLRRFFKAKKLIE) are interaction with ARF1 and IL1B. A COPII vesicle coat-binding motif is present at residues 211-212 (FF). Positions 211–219 (FFKAKKLIE) match the COPI vesicle coat-binding motif.

It belongs to the EMP24/GP25L family. In terms of assembly, predominantly dimeric and to a lesser extent monomeric in the ER. Monomer and dimer in ERGIC and cis-Golgi network. Forms homooligomer (via GOLD domain); the assembly is promoted by direct binding with leaderless cargos and may form a protein channel that facilitates cargo entry into the ERGIC. Forms heterooligomeric complexes with other members of the p24 family such as TMED2, TMED7 and TMED9. Interacts (via GOLD domain) with TMED2 (via GOLD domain); the complex is required for export of TMED10 from the ER to the cis-Golgi network; the complex is proposed to be involved in cis-Golgi network dynamics and / or biogenesis. Associates with the COPI vesicle coat subunits (coatomer). Tetramerization of the cytoplasmic domain at the Golgi membrane in vitro; the complex is proposed to interact with COPI coatomer and induce budding of the vesicles. Interacts with COPG1; the interaction involves TMED10 homodimer. Interacts with ARF1 (GDP-bound); the interaction probably involves a TMED10 oligomer. Interacts with SEC23A, SEC24B, SEC24C and SEC24D components of the coat protein complex II/COPII, indicative of an association of TMED10 with the COPII vesicle coat. Interacts with CD59. Interacts with MPPE1/PGAP5; the complex might recruit and sort GPI-anchored proteins to the ER-exit site, or the interaction might lead to recycling of PGAP5 between the ER and the Golgi. Interacts with F2LR1/PAR2. Interacts with KDELR2/ERD2; the interaction is disrupted by KDELR2 ligand. Found in a complex composed at least of SURF4, TMED2 and TMED10. Associates with the presenilin-dependent gamma-secretase complex. Interacts with STX17; the interaction is direct. Interacts with IL-1; the interaction is direct. Interacts with RAB21 (active GTP-bound form); the interaction is indirect and regulates TMED10 abundance and localization at the Golgi. In terms of tissue distribution, ubiquitous.

It is found in the endoplasmic reticulum membrane. The protein localises to the endoplasmic reticulum-Golgi intermediate compartment membrane. Its subcellular location is the golgi apparatus membrane. The protein resides in the golgi apparatus. It localises to the cis-Golgi network membrane. It is found in the trans-Golgi network membrane. The protein localises to the cytoplasmic vesicle. Its subcellular location is the secretory vesicle membrane. The protein resides in the cell membrane. It localises to the melanosome. Its function is as follows. Cargo receptor involved in protein vesicular trafficking and quality control in the endoplasmic reticulum (ER) and Golgi. The p24 protein family is a group of transmembrane proteins that bind coat protein complex I/COPI and coat protein complex II/COPII involved in vesicular trafficking between the membranes. Acts at the lumenal side for incorporation of secretory cargo molecules into transport vesicles and involved in vesicle coat formation at the cytoplasmic side. Mainly functions in the early secretory pathway and cycles between the ER, ER-Golgi intermediate compartment (ERGIC) and Golgi, mediating cargo transport through COPI and COPII-coated vesicles. In COPII vesicle-mediated anterograde transport, involved in the transport of GPI-anchored proteins by acting together with TMED2 as their cargo receptor; the function specifically implies SEC24C and SEC24D of the COPII vesicle coat and lipid raft-like microdomains of the ER. Recognizes GPI anchors structural remodeled in the ER by the GPI inositol-deacylase/PGAP1 and the metallophosphoesterase MPPE1/PGAP5. In COPI vesicle-mediated retrograde transport, involved in the biogenesis of COPI vesicles and vesicle coat recruitment. Involved in trafficking of amyloid beta A4 protein and soluble APP-beta release (independent from the modulation of gamma-secretase activity). Involved in the KDELR2-mediated retrograde transport of the toxin A subunit (CTX-A-K63)together with COPI and the COOH terminus of KDELR2. On Golgi membranes, acts as a primary receptor for ARF1-GDP, a GTP-binding protein involved in COPI-vesicle formation. Increases coatomer-dependent GTPase-activating activity of ARFGAP2 which mediates the hydrolysis of ARF1-bound GTP and therefore modulates protein trafficking from the Golgi apparatus. Involved in the exocytic trafficking of G protein-coupled receptors F2LR1/PAR2 (trypsin and tryspin-like enzyme receptor), OPRM1 (opioid receptor) and P2RY4 (UTD and UDP receptor) from the Golgi to the plasma membrane, thus contributing to receptor resensitization. In addition to its cargo receptor activity, may also act as a protein channel after oligomerization, facilitating the post-translational entry of leaderless cytoplasmic cargo into the ERGIC. Involved in the translocation into ERGIC, the vesicle entry and the secretion of leaderless cargos (lacking the secretion signal sequence), including the mature form of interleukin 1/IL-1 family members, the alpha-crystallin B chain HSPB5, the carbohydrate-binding proteins galectin-1/LGALS1 and galectin-3/LGALS3, the microtubule-associated protein Tau/MAPT, and the annexin A1/ANXA1; the translocation process is dependent on cargo protein unfolding and enhanced by chaperones HSP90AB1 and HSP90B1/GRP9. Could also associates with the presenilin-dependent gamma-secretase complex in order to regulate gamma-cleavages of the amyloid beta A4 protein to yield amyloid-beta 40/Abeta40. This chain is Transmembrane emp24 domain-containing protein 10, found in Rattus norvegicus (Rat).